Here is a 78-residue protein sequence, read N- to C-terminus: Putative DPH3 homolog B (78 aa).

A DPH-type MB domain is found at 4–60 (FHDEVEIEDFQYDEDSETYFCPCPCGDNFSITKEELENGEGVAMCPGCSLIIKVIYD). Zn(2+)-binding residues include C26, C28, C48, and C51.

The protein belongs to the DPH3 family.

This is Putative DPH3 homolog B (DPH3P1) from Homo sapiens (Human).